We begin with the raw amino-acid sequence, 178 residues long: ATP-dependent protease subunit HslV (178 aa).

T7 is a catalytic residue. G162, C165, and T168 together coordinate Na(+).

It belongs to the peptidase T1B family. HslV subfamily. As to quaternary structure, a double ring-shaped homohexamer of HslV is capped on each side by a ring-shaped HslU homohexamer. The assembly of the HslU/HslV complex is dependent on binding of ATP.

Its subcellular location is the cytoplasm. It catalyses the reaction ATP-dependent cleavage of peptide bonds with broad specificity.. With respect to regulation, allosterically activated by HslU binding. In terms of biological role, protease subunit of a proteasome-like degradation complex believed to be a general protein degrading machinery. The chain is ATP-dependent protease subunit HslV from Burkholderia ambifaria (strain ATCC BAA-244 / DSM 16087 / CCUG 44356 / LMG 19182 / AMMD) (Burkholderia cepacia (strain AMMD)).